A 1544-amino-acid chain; its full sequence is Lysophospholipase NTE1 (1544 aa).

The Cytoplasmic portion of the chain corresponds to 1-37; that stretch reads MSTIEIVSTVAEYTEIHSPVSSKFLLPSARDSSSSIS. The helical transmembrane segment at 38–58 threads the bilayer; sequence LFSAIFWFWSWLFFKIMNIFL. Topologically, residues 59-76 are lumenal; sequence YYIPNIIVNLFSVNFQIT. Residues 77 to 97 form a helical membrane-spanning segment; sequence LSLSSIVITLTGIISFCFLIV. Residues 98-1544 are Cytoplasmic-facing; that stretch reads RYKYLTRYSK…RKSLYRRSSI (1447 aa). Disordered stretches follow at residues 265–312 and 424–552; these read RLFS…RNYP and ESPS…EETE. The span at 275 to 310 shows a compositional bias: polar residues; it reads NPASNPLSPDNTGSKSFDPLSSGNFNDTSLSSSDRN. The segment covering 425 to 447 has biased composition (low complexity); the sequence is SPSVSINKTSSSSSSLPKKSTTS. Polar residues-rich tracts occupy residues 448 to 458 and 517 to 536; these read LRPLNRNQSSR and QISS…TTKF. A compositionally biased stretch (basic and acidic residues) spans 537–546; sequence ENIRDRTFSD. A nucleoside 3',5'-cyclic phosphate is bound by residues 681 to 811 and 807 to 960; these read SFES…LKSL and KLKS…VANK. The PNPLA domain maps to 1237–1401; the sequence is LVLGGGGSRG…LDNLPVMEMK (165 aa). Residues 1241 to 1246 carry the GXGXXG motif; that stretch reads GGGSRG. A GXSXG motif is present at residues 1268-1272; the sequence is GTSIG. S1270 acts as the Nucleophile in catalysis. Residue D1388 is the Proton acceptor of the active site. Positions 1388-1390 match the DGA/G motif; that stretch reads DGG.

This sequence belongs to the NTE family.

Its subcellular location is the endoplasmic reticulum membrane. The catalysed reaction is a 1-acyl-sn-glycero-3-phosphocholine + H2O = sn-glycerol 3-phosphocholine + a fatty acid + H(+). Its activity is regulated as follows. Inhibited by organophosphorus esters. Functionally, intracellular phospholipase B that catalyzes the double deacylation of phosphatidylcholine (PC) to glycerophosphocholine (GroPCho). Plays an important role in membrane lipid homeostasis. Responsible for the rapid PC turnover in response to inositol, elevated temperatures, or when choline is present in the growth medium. The sequence is that of Lysophospholipase NTE1 (NTE1) from Debaryomyces hansenii (strain ATCC 36239 / CBS 767 / BCRC 21394 / JCM 1990 / NBRC 0083 / IGC 2968) (Yeast).